The primary structure comprises 175 residues: Ribulose bisphosphate carboxylase small subunit, chloroplastic 2 (175 aa).

Residues 1–46 (MAPAVMASSATTVAPFQGLKSTAGLPISCRSGSTGLSSVSNGGRIR) constitute a chloroplast transit peptide.

It belongs to the RuBisCO small chain family. As to quaternary structure, heterohexadecamer of 8 large and 8 small subunits.

It localises to the plastid. Its subcellular location is the chloroplast. Its function is as follows. RuBisCO catalyzes two reactions: the carboxylation of D-ribulose 1,5-bisphosphate, the primary event in carbon dioxide fixation, as well as the oxidative fragmentation of the pentose substrate. Both reactions occur simultaneously and in competition at the same active site. Although the small subunit is not catalytic it is essential for maximal activity. The chain is Ribulose bisphosphate carboxylase small subunit, chloroplastic 2 from Triticum aestivum (Wheat).